The sequence spans 161 residues: Peptidyl-prolyl cis-trans isomerase (161 aa).

Positions 6–160 (FFDIKAGDER…KKIIIEDCGE (155 aa)) constitute a PPIase cyclophilin-type domain.

Belongs to the cyclophilin-type PPIase family. PPIase A subfamily. In terms of tissue distribution, found mainly in the tegument, gut epithelium, and muscle layers. Also found in the interior of the parasite.

The enzyme catalyses [protein]-peptidylproline (omega=180) = [protein]-peptidylproline (omega=0). With respect to regulation, binds cyclosporin A (CsA). CsA mediates some of its effects via an inhibitory action on PPIase. In terms of biological role, PPIases accelerate the folding of proteins. It catalyzes the cis-trans isomerization of proline imidic peptide bonds in oligopeptides. This Schistosoma mansoni (Blood fluke) protein is Peptidyl-prolyl cis-trans isomerase.